The chain runs to 279 residues: Movement protein (279 aa).

It belongs to the cucumovirus movement protein family.

It localises to the host cell junction. Its subcellular location is the host plasmodesma. Functionally, transports viral genome to neighboring plant cells directly through plasmosdesmata, without any budding. The movement protein allows efficient cell to cell propagation, by bypassing the host cell wall barrier. Acts by forming a tubular structure at the host plasmodesmata, enlarging it enough to allow free passage of virion capsids. The polypeptide is Movement protein (Cucumber mosaic virus (strain Ixora) (CMV)).